We begin with the raw amino-acid sequence, 367 residues long: Peptide chain release factor 2 (367 aa).

An N5-methylglutamine modification is found at Gln-254.

This sequence belongs to the prokaryotic/mitochondrial release factor family. Post-translationally, methylated by PrmC. Methylation increases the termination efficiency of RF2.

The protein localises to the cytoplasm. Peptide chain release factor 2 directs the termination of translation in response to the peptide chain termination codons UGA and UAA. This chain is Peptide chain release factor 2, found in Janthinobacterium sp. (strain Marseille) (Minibacterium massiliensis).